A 403-amino-acid chain; its full sequence is PP2A regulatory subunit TAP46 (403 aa).

2 disordered regions span residues 158–184 (ERRG…LDDD) and 351–403 (ANSS…TPCG). 2 stretches are compositionally biased toward acidic residues: residues 174–184 (ETEEDDVLDDD) and 366–375 (EDDEEDDDDA). Basic and acidic residues predominate over residues 376 to 391 (AQDKARAWDDWKDDNP).

It belongs to the IGBP1/TAP42 family. In terms of assembly, interacts with NPP4 and NPP5, two catalytic subunits (subunit C) of PP2A.

The protein resides in the cytoplasm. Its subcellular location is the nucleus. Its function is as follows. Involved in the regulation of the TOR signaling pathway. Seems to act as a regulator of PP2A catalytic activity. The protein is PP2A regulatory subunit TAP46 of Nicotiana benthamiana.